Here is a 537-residue protein sequence, read N- to C-terminus: Synaptotagmin-C (537 aa).

Topologically, residues 1 to 52 (MSGDGEDELCRNALALVNELCFSVRGNHNNEKCIEFSYLLRDRDRTRHIETD) are vesicular. Residues 53 to 78 (ISVSLLSVIVTFCGIVLLGVSLFVSW) form a helical membrane-spanning segment. Residues 79 to 537 (KLCWIPWRDK…TIVVESPHSV (459 aa)) lie on the Cytoplasmic side of the membrane. 2 disordered regions span residues 92–111 (PQRRDSQHHPHQHLHHHHSH) and 142–200 (IKLS…EFGT). Positions 100–110 (HPHQHLHHHHS) are enriched in basic residues. Residues 143 to 174 (KLSQTSPDIPVDTSSGSKENNIPNAHSQQQVS) are compositionally biased toward polar residues. The tract at residues 228-477 (EAKKHQKVNC…VIGMCRVGNA (250 aa)) is phospholipid binding. C2 domains follow at residues 236-357 (NCGR…TIWR) and 368-501 (DLGE…EQWH). Aspartate 267, aspartate 273, aspartate 325, phenylalanine 326, aspartate 327, serine 330, aspartate 333, aspartate 399, aspartate 405, aspartate 459, and aspartate 461 together coordinate Ca(2+).

The protein belongs to the synaptotagmin family. Homodimer or homotrimer (possible). The cofactor is Ca(2+).

The protein localises to the cytoplasmic vesicle. It is found in the secretory vesicle. Its subcellular location is the synaptic vesicle membrane. It localises to the synapse. In terms of biological role, may have a regulatory role in the membrane interactions during trafficking of synaptic vesicles at the active zone of the synapse. It binds acidic phospholipids with a specificity that requires the presence of both an acidic head group and a diacyl backbone. In Diplobatis ommata (Ocellated electric ray), this protein is Synaptotagmin-C (P65-C).